We begin with the raw amino-acid sequence, 447 residues long: Tubulin beta chain (447 aa).

GTP-binding residues include Gln-11, Glu-69, Ser-138, Gly-142, Thr-143, Gly-144, Asn-204, and Asn-226. Glu-69 lines the Mg(2+) pocket.

Belongs to the tubulin family. As to quaternary structure, dimer of alpha and beta chains. A typical microtubule is a hollow water-filled tube with an outer diameter of 25 nm and an inner diameter of 15 nM. Alpha-beta heterodimers associate head-to-tail to form protofilaments running lengthwise along the microtubule wall with the beta-tubulin subunit facing the microtubule plus end conferring a structural polarity. Microtubules usually have 13 protofilaments but different protofilament numbers can be found in some organisms and specialized cells. It depends on Mg(2+) as a cofactor.

It is found in the cytoplasm. Its subcellular location is the cytoskeleton. Its function is as follows. Tubulin is the major constituent of microtubules, a cylinder consisting of laterally associated linear protofilaments composed of alpha- and beta-tubulin heterodimers. Microtubules grow by the addition of GTP-tubulin dimers to the microtubule end, where a stabilizing cap forms. Below the cap, tubulin dimers are in GDP-bound state, owing to GTPase activity of alpha-tubulin. In Penicillium digitatum (Green mold), this protein is Tubulin beta chain (TUB2).